We begin with the raw amino-acid sequence, 462 residues long: cAMP-dependent protein kinase regulatory subunit (462 aa).

The tract at residues 54–203 (TPSPRFPPSP…RLKYAIEGNF (150 aa)) is dimerization and phosphorylation. The tract at residues 79-157 (FGANANPFGG…PTTDSYPAQY (79 aa)) is disordered. The segment covering 80-102 (GANANPFGGSSSNPNPFGGSASP) has biased composition (low complexity). S164 carries the post-translational modification Phosphoserine. Residues 204-333 (LFSH…FLEE), E282, R291, 336-453 (ILSS…KTGV), E401, and R410 each bind 3',5'-cyclic AMP.

Belongs to the cAMP-dependent kinase regulatory chain family. In terms of assembly, tetramer, composed of 2 regulatory (R) and 2 catalytic (C) subunits. In the presence of cAMP it dissociates into 2 active monomeric C subunits and an R dimer.

The chain is cAMP-dependent protein kinase regulatory subunit (pkar1) from Hypocrea atroviridis (Trichoderma atroviride).